Here is a 444-residue protein sequence, read N- to C-terminus: Tryptophan 5-hydroxylase 1 (444 aa).

Residues 19–94 (SLIFSLKNEV…NVLSVNLPDN (76 aa)) enclose the ACT domain. S58 carries the post-translational modification Phosphoserine; by PKA. L-tryptophan-binding residues include Y235, R257, and T265. Residues H272, H277, and E317 each contribute to the Fe cation site. Residues S336 and I366 each coordinate L-tryptophan.

This sequence belongs to the biopterin-dependent aromatic amino acid hydroxylase family. Homotetramer. Interacts with DNAJC12. The cofactor is Fe(2+). Post-translationally, ubiquitinated, leading to its degradation by the proteasome. Ubiquitinated is triggered by phosphorylation. Phosphorylated; triggering degradation by the proteasome. As to expression, seems to be less widely expressed than isoform 1.

It catalyses the reaction (6R)-L-erythro-5,6,7,8-tetrahydrobiopterin + L-tryptophan + O2 = 5-hydroxy-L-tryptophan + (4aS,6R)-4a-hydroxy-L-erythro-5,6,7,8-tetrahydrobiopterin. The protein operates within aromatic compound metabolism; serotonin biosynthesis; serotonin from L-tryptophan: step 1/2. In terms of biological role, oxidizes L-tryptophan to 5-hydroxy-l-tryptophan in the rate-determining step of serotonin biosynthesis. The sequence is that of Tryptophan 5-hydroxylase 1 (TPH1) from Homo sapiens (Human).